The chain runs to 269 residues: ParA family protein MG470 (269 aa).

It belongs to the ParA family.

In Mycoplasma genitalium (strain ATCC 33530 / DSM 19775 / NCTC 10195 / G37) (Mycoplasmoides genitalium), this protein is ParA family protein MG470.